Here is a 475-residue protein sequence, read N- to C-terminus: 3-isopropylmalate dehydratase large subunit (475 aa).

Cysteine 353, cysteine 414, and cysteine 417 together coordinate [4Fe-4S] cluster.

It belongs to the aconitase/IPM isomerase family. LeuC type 1 subfamily. In terms of assembly, heterodimer of LeuC and LeuD. [4Fe-4S] cluster is required as a cofactor.

It catalyses the reaction (2R,3S)-3-isopropylmalate = (2S)-2-isopropylmalate. It participates in amino-acid biosynthesis; L-leucine biosynthesis; L-leucine from 3-methyl-2-oxobutanoate: step 2/4. Its function is as follows. Catalyzes the isomerization between 2-isopropylmalate and 3-isopropylmalate, via the formation of 2-isopropylmaleate. In Marinomonas sp. (strain MWYL1), this protein is 3-isopropylmalate dehydratase large subunit.